The sequence spans 103 residues: Large ribosomal subunit protein uL24 (103 aa).

This sequence belongs to the universal ribosomal protein uL24 family. As to quaternary structure, part of the 50S ribosomal subunit.

In terms of biological role, one of two assembly initiator proteins, it binds directly to the 5'-end of the 23S rRNA, where it nucleates assembly of the 50S subunit. One of the proteins that surrounds the polypeptide exit tunnel on the outside of the subunit. This Roseobacter denitrificans (strain ATCC 33942 / OCh 114) (Erythrobacter sp. (strain OCh 114)) protein is Large ribosomal subunit protein uL24.